We begin with the raw amino-acid sequence, 188 residues long: Peptide deformylase (188 aa).

Fe cation-binding residues include C107 and H149. E150 is an active-site residue. Fe cation is bound at residue H153.

It belongs to the polypeptide deformylase family. Requires Fe(2+) as cofactor.

The enzyme catalyses N-terminal N-formyl-L-methionyl-[peptide] + H2O = N-terminal L-methionyl-[peptide] + formate. In terms of biological role, removes the formyl group from the N-terminal Met of newly synthesized proteins. Requires at least a dipeptide for an efficient rate of reaction. N-terminal L-methionine is a prerequisite for activity but the enzyme has broad specificity at other positions. The chain is Peptide deformylase from Thermosynechococcus vestitus (strain NIES-2133 / IAM M-273 / BP-1).